The primary structure comprises 270 residues: 4-hydroxy-tetrahydrodipicolinate reductase (270 aa).

Residues 9–14 (GAGGRM) and E35 contribute to the NAD(+) site. Position 36 (R36) interacts with NADP(+). Residues 99 to 101 (GTT) and 123 to 126 (ASNY) each bind NAD(+). The Proton donor/acceptor role is filled by H156. H157 contacts (S)-2,3,4,5-tetrahydrodipicolinate. K160 (proton donor) is an active-site residue. 166–167 (GT) is a binding site for (S)-2,3,4,5-tetrahydrodipicolinate.

The protein belongs to the DapB family.

The protein resides in the cytoplasm. The catalysed reaction is (S)-2,3,4,5-tetrahydrodipicolinate + NAD(+) + H2O = (2S,4S)-4-hydroxy-2,3,4,5-tetrahydrodipicolinate + NADH + H(+). It carries out the reaction (S)-2,3,4,5-tetrahydrodipicolinate + NADP(+) + H2O = (2S,4S)-4-hydroxy-2,3,4,5-tetrahydrodipicolinate + NADPH + H(+). Its pathway is amino-acid biosynthesis; L-lysine biosynthesis via DAP pathway; (S)-tetrahydrodipicolinate from L-aspartate: step 4/4. Its function is as follows. Catalyzes the conversion of 4-hydroxy-tetrahydrodipicolinate (HTPA) to tetrahydrodipicolinate. The protein is 4-hydroxy-tetrahydrodipicolinate reductase of Actinobacillus succinogenes (strain ATCC 55618 / DSM 22257 / CCUG 43843 / 130Z).